The sequence spans 782 residues: MGSDWDEIKRLAADFQKAQLTSTLQKLSERNCVEIVTLLLEKQMLEVVFTNDGKEYITPDHLEREIQDELYVNGGRANLVEVSKTLNVDLSRIEVLAERIAAENPSVHLVLGQLIDEDYISHIAQEINEKLVLRGEISISELASQFDLPSDFLQHDVVEKHLGKIIKGRQDAANPRVFFTQAYIQRCKAKIRGALAAITRPINVAVILQQIGVQEKIFHSLLDEIAPAGQVTSKLANSQYVPHIYAKTQADWVNSFYKQNSFLEYDAIQKLGISDAKSYIRKQFPNEEFLFLKRVALGARLVELTVVTALNECSATKQYLDLTTILPSNLSEEDIEEVFSTIMAQKHSNPSNFVYLDSIVFSQPYLAQLVQPCQALAESQAKAAIDGGVYQQYIVEKTLAQKGNASTQELEDDGKVDKRDERRKKASSGKAGGGAQGRETKTKSTKKHQRGKAAAHNDSDDEDDVQQGSRGGGGVNKKAVKPLELVKTADIVKLITASLEEEGLEHLSKPIAALYTNQFNQTALARAQELFEATPQTNRRQTHAAIQDRINTLLIDIRLYEKGLKLFPQDTQTQLVKYLLKSLGNDICNELSLYVAGECNLTVKNTNLNVDQRNKLAQECEAQYRAALLEQNKALNKSIDEFELATETVLKACSMIIKKVDKKKDRLLIADHKKKLQKQLLECQDPALLLHLAALILFTAISGSILHASGKFVSAILQHIRGSLNEEQNALLLRYHDLVLQVLQATPDSSESKMANEHLQAMQAQVVELAQNFSRASVSKAD.

The tract at residues 404-477 (NASTQELEDD…GSRGGGGVNK (74 aa)) is disordered. A compositionally biased stretch (basic residues) spans 443–453 (KSTKKHQRGKA).

It belongs to the UFL1 family.

Its function is as follows. E3 UFM1-protein ligase that mediates ufmylation of target proteins. This is E3 UFM1-protein ligase 1 homolog from Drosophila erecta (Fruit fly).